The following is a 160-amino-acid chain: CXXC motif containing zinc binding protein (160 aa).

4 residues coordinate Zn(2+): cysteine 33, cysteine 36, cysteine 67, and cysteine 70.

It belongs to the UPF0587 family.

In Xenopus laevis (African clawed frog), this protein is CXXC motif containing zinc binding protein (czib).